Reading from the N-terminus, the 277-residue chain is Bifunctional protein FolD (277 aa).

NADP(+) is bound by residues 160–162 (GAS), Ser185, and Ile226.

Belongs to the tetrahydrofolate dehydrogenase/cyclohydrolase family. As to quaternary structure, homodimer.

It carries out the reaction (6R)-5,10-methylene-5,6,7,8-tetrahydrofolate + NADP(+) = (6R)-5,10-methenyltetrahydrofolate + NADPH. The catalysed reaction is (6R)-5,10-methenyltetrahydrofolate + H2O = (6R)-10-formyltetrahydrofolate + H(+). The protein operates within one-carbon metabolism; tetrahydrofolate interconversion. Catalyzes the oxidation of 5,10-methylenetetrahydrofolate to 5,10-methenyltetrahydrofolate and then the hydrolysis of 5,10-methenyltetrahydrofolate to 10-formyltetrahydrofolate. The sequence is that of Bifunctional protein FolD from Vesicomyosocius okutanii subsp. Calyptogena okutanii (strain HA).